A 625-amino-acid chain; its full sequence is Protein SUPPRESSOR OF GENE SILENCING 3 (625 aa).

Disordered stretches follow at residues 1–20, 30–148, and 161–195; these read MSSR…GYRP, AGTR…SAQH, and VDNA…QKSH. Over residues 54-70 the composition is skewed to polar residues; it reads KPGNTSGKTWVSQNSNP. The segment covering 80–94 has biased composition (low complexity); sequence GRGSNVSGRGNNVSG. Acidic residues predominate over residues 161–188; that stretch reads VDNASEEENDSDALDDSDDDLASDDYDS. 2 coiled-coil regions span residues 452 to 533 and 564 to 615; these read KNKL…QQQE and IEFQ…EQLM.

It belongs to the SGS3 family. As to quaternary structure, interacts with begomoviruses protein V2. Interacts with SGIP1 in cytoplasmic granules.

The protein resides in the cytoplasm. The protein localises to the perinuclear region. It is found in the cytoplasmic granule. In terms of biological role, required for post-transcriptional gene silencing and natural virus resistance. May bind nucleic acids and is essential for the biogenesis of trans-acting siRNAs but is not required for silencing induced by IR-PTGS. Involved in the juvenile-to-adult transition regulation. In case of begomoviruses infection, it is targeted by the viral protein V2 leading to suppression of post-transcriptional gene silencing. Involved in the mechanisms necessary for quick response to heat and subsequent heritable transgenerational memory of heat acclimation (global warming) such as early flowering and attenuated immunity; this process includes epigenetic regulation as well as post-transcriptional gene silencing (PTGS). In response to heat, HSFA2 is activated and promotes the expression of REF6 which in turn derepresses HSFA2, thus establishing an inheritable feedback loop able to trigger SGIP1 and subsequent SGIP1-mediated SGS3 degradation; this prevents the biosynthesis of trans-acting siRNA (tasiRNA) and leads to the release of HTT5, which drives early flowering but attenuates immunity. The sequence is that of Protein SUPPRESSOR OF GENE SILENCING 3 from Arabidopsis thaliana (Mouse-ear cress).